The following is a 71-amino-acid chain: Phosphatidylinositol N-acetylglucosaminyltransferase subunit Y (71 aa).

At 1-5 (MIRSL) the chain is on the cytoplasmic side. The chain crosses the membrane as a helical span at residues 6–26 (PTMTVLIPLVSLAGLLYSASV). Topologically, residues 27–44 (EEGFPEGCTSASSLCFYS) are lumenal. Residues 45-65 (LLLPVTVPVYVFFHLWTWMGL) form a helical membrane-spanning segment. The Cytoplasmic portion of the chain corresponds to 66–71 (KLFRHN).

In terms of assembly, component of the glycosylphosphatidylinositol-N-acetylglucosaminyltransferase (GPI-GnT) complex composed at least by PIGA, PIGC, PIGH, PIGP, PIGQ, PIGY and DPM2. Interacts directly with PIGA; this interaction regulates glycosylphosphatidylinositol-N-acetylglucosaminyltransferase activity. Does not interact with Ras proteins.

The protein resides in the endoplasmic reticulum membrane. The protein operates within glycolipid biosynthesis; glycosylphosphatidylinositol-anchor biosynthesis. Functionally, part of the glycosylphosphatidylinositol-N-acetylglucosaminyltransferase (GPI-GnT) complex that catalyzes the transfer of N-acetylglucosamine from UDP-N-acetylglucosamine to phosphatidylinositol and participates in the first step of GPI biosynthesis. May act by regulating the catalytic subunit PIGA. The chain is Phosphatidylinositol N-acetylglucosaminyltransferase subunit Y from Mus musculus (Mouse).